We begin with the raw amino-acid sequence, 1241 residues long: ATP-dependent helicase/nuclease subunit A (1241 aa).

The 474-residue stretch at Ser-12–Arg-485 folds into the UvrD-like helicase ATP-binding domain. Residue Ala-33–Thr-40 coordinates ATP. The UvrD-like helicase C-terminal domain occupies Gly-505–Gly-805.

Belongs to the helicase family. AddA subfamily. In terms of assembly, heterodimer of AddA and AddB/RexB. Requires Mg(2+) as cofactor.

The catalysed reaction is Couples ATP hydrolysis with the unwinding of duplex DNA by translocating in the 3'-5' direction.. It catalyses the reaction ATP + H2O = ADP + phosphate + H(+). Functionally, the heterodimer acts as both an ATP-dependent DNA helicase and an ATP-dependent, dual-direction single-stranded exonuclease. Recognizes the chi site generating a DNA molecule suitable for the initiation of homologous recombination. The AddA nuclease domain is required for chi fragment generation; this subunit has the helicase and 3' -&gt; 5' nuclease activities. This Bacillus cereus (strain AH187) protein is ATP-dependent helicase/nuclease subunit A.